The primary structure comprises 817 residues: DNA gyrase subunit A (817 aa).

In terms of domain architecture, Topo IIA-type catalytic spans 39–505; the sequence is LPDARDGLKP…AVEDVSIEDL (467 aa). The O-(5'-phospho-DNA)-tyrosine intermediate role is filled by tyrosine 127. The short motif at 532–538 is the GyrA-box element; that stretch reads QGRGGKG.

Belongs to the type II topoisomerase GyrA/ParC subunit family. In terms of assembly, heterotetramer, composed of two GyrA and two GyrB chains. In the heterotetramer, GyrA contains the active site tyrosine that forms a transient covalent intermediate with DNA, while GyrB binds cofactors and catalyzes ATP hydrolysis.

The protein resides in the cytoplasm. The catalysed reaction is ATP-dependent breakage, passage and rejoining of double-stranded DNA.. In terms of biological role, a type II topoisomerase that negatively supercoils closed circular double-stranded (ds) DNA in an ATP-dependent manner to modulate DNA topology and maintain chromosomes in an underwound state. Negative supercoiling favors strand separation, and DNA replication, transcription, recombination and repair, all of which involve strand separation. Also able to catalyze the interconversion of other topological isomers of dsDNA rings, including catenanes and knotted rings. Type II topoisomerases break and join 2 DNA strands simultaneously in an ATP-dependent manner. The polypeptide is DNA gyrase subunit A (Aminobacterium colombiense (strain DSM 12261 / ALA-1)).